The primary structure comprises 613 residues: DNA mismatch repair protein MutL (613 aa).

Belongs to the DNA mismatch repair MutL/HexB family.

Its function is as follows. This protein is involved in the repair of mismatches in DNA. It is required for dam-dependent methyl-directed DNA mismatch repair. May act as a 'molecular matchmaker', a protein that promotes the formation of a stable complex between two or more DNA-binding proteins in an ATP-dependent manner without itself being part of a final effector complex. The sequence is that of DNA mismatch repair protein MutL from Janthinobacterium sp. (strain Marseille) (Minibacterium massiliensis).